The chain runs to 315 residues: MAAEISISASSRAICLQRNPFPAPKYFATAPPLLFFSPLTCNLDAILRSRRKPRLAACFVLKDDKLYTAQSGKQSDTEAIGDEIEVETNEEKSLAVRLAEKFARKKSERFTYLVAAVMSSLGITSMAVISVYYRFSWQMEGGEMPFSEMFCTFALAFGAAIGMEYWARWAHRALWHASLWHMHESHHRPREGPFELNDIFAIINAVPAIALLSFGFNHKGLIPGLCFGAGLGITVFGMAYMFVHDGLVHKRFPVGPIANVPYFQRVAAAHQLHHSDKFDGVPYGLFLGPKELEEVGVLEELEKEVNRRIKSSKRL.

The transit peptide at 1 to 58 (MAAEISISASSRAICLQRNPFPAPKYFATAPPLLFFSPLTCNLDAILRSRRKPRLAAC) directs the protein to the chloroplast. Transmembrane regions (helical) follow at residues 112–132 (YLVAAVMSSLGITSMAVISVY) and 146–166 (FSEMFCTFALAFGAAIGMEYW). The region spanning 159–286 (AAIGMEYWAR…KFDGVPYGLF (128 aa)) is the Fatty acid hydroxylase domain. A Histidine box-1 motif is present at residues 171–176 (HRALWH). The Histidine box-2 signature appears at 183–187 (HESHH). 2 consecutive transmembrane segments (helical) span residues 196 to 216 (LNDIFAIINAVPAIALLSFGF) and 222 to 242 (IPGLCFGAGLGITVFGMAYMF). The short motif at 244-249 (HDGLVH) is the Histidine box-3 element. The short motif at 270–274 (HQLHH) is the Histidine box-4 element.

This sequence belongs to the sterol desaturase family.

The protein localises to the plastid. Its subcellular location is the chloroplast membrane. It catalyses the reaction all-trans-beta-carotene + 4 reduced [2Fe-2S]-[ferredoxin] + 2 O2 + 4 H(+) = all-trans-zeaxanthin + 4 oxidized [2Fe-2S]-[ferredoxin] + 2 H2O. It carries out the reaction all-trans-beta-carotene + 2 reduced [2Fe-2S]-[ferredoxin] + O2 + 2 H(+) = beta-cryptoxanthin + 2 oxidized [2Fe-2S]-[ferredoxin] + H2O. The enzyme catalyses beta-cryptoxanthin + 2 reduced [2Fe-2S]-[ferredoxin] + O2 + 2 H(+) = all-trans-zeaxanthin + 2 oxidized [2Fe-2S]-[ferredoxin] + H2O. With respect to regulation, inhibited by o-phenanthroline and 8-hydroxyquinoline. Functionally, nonheme diiron monooxygenase involved in the biosynthesis of xanthophylls. Specific for beta-ring hydroxylations of beta-carotene. Produces beta-cryptoxanthin and zeaxanthin. Uses ferredoxin as an electron donor. This is Beta-carotene hydroxylase 1, chloroplastic from Capsicum annuum (Capsicum pepper).